The following is a 278-amino-acid chain: 4-deoxy-L-threo-5-hexosulose-uronate ketol-isomerase (278 aa).

Residues H196, H198, E203, and H245 each coordinate Zn(2+).

It belongs to the KduI family. Requires Zn(2+) as cofactor.

It catalyses the reaction 5-dehydro-4-deoxy-D-glucuronate = 3-deoxy-D-glycero-2,5-hexodiulosonate. It participates in glycan metabolism; pectin degradation; 2-dehydro-3-deoxy-D-gluconate from pectin: step 4/5. In terms of biological role, catalyzes the isomerization of 5-dehydro-4-deoxy-D-glucuronate to 3-deoxy-D-glycero-2,5-hexodiulosonate. In Shigella flexneri serotype 5b (strain 8401), this protein is 4-deoxy-L-threo-5-hexosulose-uronate ketol-isomerase.